Here is a 75-residue protein sequence, read N- to C-terminus: Cytochrome c oxidase subunit 6C (75 aa).

Over 1–13 (MASSALAKPQMRG) the chain is Mitochondrial matrix. The chain crosses the membrane as a helical span at residues 14-54 (LLARRLRIHIVGAFVVSLGVAAFYKYAVAEPRKKAYADFYR). The Mitochondrial intermembrane segment spans residues 55 to 75 (NYDSVKYFEEMRKAGVFQSVK).

This sequence belongs to the cytochrome c oxidase subunit 6c family. In terms of assembly, component of the cytochrome c oxidase (complex IV, CIV), a multisubunit enzyme composed of 14 subunits. The complex is composed of a catalytic core of 3 subunits MT-CO1, MT-CO2 and MT-CO3, encoded in the mitochondrial DNA, and 11 supernumerary subunits COX4I, COX5A, COX5B, COX6A, COX6B, COX6C, COX7A, COX7B, COX7C, COX8 and NDUFA4, which are encoded in the nuclear genome. The complex exists as a monomer or a dimer and forms supercomplexes (SCs) in the inner mitochondrial membrane with NADH-ubiquinone oxidoreductase (complex I, CI) and ubiquinol-cytochrome c oxidoreductase (cytochrome b-c1 complex, complex III, CIII), resulting in different assemblies (supercomplex SCI(1)III(2)IV(1) and megacomplex MCI(2)III(2)IV(2)).

The protein resides in the mitochondrion inner membrane. The protein operates within energy metabolism; oxidative phosphorylation. Its function is as follows. Component of the cytochrome c oxidase, the last enzyme in the mitochondrial electron transport chain which drives oxidative phosphorylation. The respiratory chain contains 3 multisubunit complexes succinate dehydrogenase (complex II, CII), ubiquinol-cytochrome c oxidoreductase (cytochrome b-c1 complex, complex III, CIII) and cytochrome c oxidase (complex IV, CIV), that cooperate to transfer electrons derived from NADH and succinate to molecular oxygen, creating an electrochemical gradient over the inner membrane that drives transmembrane transport and the ATP synthase. Cytochrome c oxidase is the component of the respiratory chain that catalyzes the reduction of oxygen to water. Electrons originating from reduced cytochrome c in the intermembrane space (IMS) are transferred via the dinuclear copper A center (CU(A)) of subunit 2 and heme A of subunit 1 to the active site in subunit 1, a binuclear center (BNC) formed by heme A3 and copper B (CU(B)). The BNC reduces molecular oxygen to 2 water molecules using 4 electrons from cytochrome c in the IMS and 4 protons from the mitochondrial matrix. This is Cytochrome c oxidase subunit 6C (COX6C) from Nycticebus coucang (Slow loris).